A 264-amino-acid polypeptide reads, in one-letter code: MIPYHDLLERILSDGAEKHDRTGTGTLSVFGHQLRFDLAAGFPMLTTKRLPLKAIIHELLWFLQGDTNIKYLHDHGVTIWDEWADANGDLGPVYGAQWRSWPTADGRSIDQIAHVVDMIRRNPDSRRLIVTAWNPADVEKMALPPCHCLFQFYVANGRLSCQLYQRSADVFLGVPFNIASYALLTMMVAQVTGLKPGDFIHTLGDAHLYSNHLEQARLQLTRAPRALPAMAINPAVTDIFGFRYEDFTLHGYDPHPHIKAEVAV.

DUMP contacts are provided by residues arginine 21 and 126-127; that span reads RR. The active-site Nucleophile is cysteine 146. DUMP contacts are provided by residues 166–169, asparagine 177, and 207–209; these read RSAD and HLY. Aspartate 169 lines the (6R)-5,10-methylene-5,6,7,8-tetrahydrofolate pocket. Alanine 263 lines the (6R)-5,10-methylene-5,6,7,8-tetrahydrofolate pocket.

The protein belongs to the thymidylate synthase family. Bacterial-type ThyA subfamily. Homodimer.

Its subcellular location is the cytoplasm. It carries out the reaction dUMP + (6R)-5,10-methylene-5,6,7,8-tetrahydrofolate = 7,8-dihydrofolate + dTMP. It participates in pyrimidine metabolism; dTTP biosynthesis. In terms of biological role, catalyzes the reductive methylation of 2'-deoxyuridine-5'-monophosphate (dUMP) to 2'-deoxythymidine-5'-monophosphate (dTMP) while utilizing 5,10-methylenetetrahydrofolate (mTHF) as the methyl donor and reductant in the reaction, yielding dihydrofolate (DHF) as a by-product. This enzymatic reaction provides an intracellular de novo source of dTMP, an essential precursor for DNA biosynthesis. In Rhodopseudomonas palustris (strain HaA2), this protein is Thymidylate synthase.